The following is a 625-amino-acid chain: Prothrombin (625 aa).

The signal sequence occupies residues 1–24; the sequence is MARVRGPRLPGCLALAALFSLVHS. Residues 25–43 constitute a propeptide that is removed on maturation; the sequence is QHVFLAHQQASSLLQRARR. A Gla domain is found at 44 to 90; the sequence is ANKGFLEEVRKGNLERECLEEPCSREEAFEALESLSATDAFWAKYTA. A 4-carboxyglutamate mark is found at glutamate 50, glutamate 51, glutamate 58, glutamate 60, glutamate 63, glutamate 64, glutamate 69, glutamate 70, glutamate 73, and glutamate 76. Cysteine 61 and cysteine 66 form a disulfide bridge. Cystine bridges form between cysteine 91-cysteine 104, cysteine 109-cysteine 187, cysteine 130-cysteine 170, cysteine 158-cysteine 182, cysteine 214-cysteine 292, cysteine 235-cysteine 275, cysteine 263-cysteine 287, cysteine 339-cysteine 485, cysteine 394-cysteine 410, cysteine 539-cysteine 553, and cysteine 567-cysteine 597. Kringle domains follow at residues 109 to 187 and 214 to 292; these read CAEG…VPVC and CVPD…LNYC. N-linked (GlcNAc...) asparagine glycosylation is found at asparagine 120 and asparagine 144. Residues 367 to 621 form the Peptidase S1 domain; the sequence is IVEGQDAEVG…LKKWIQKVID (255 aa). Histidine 409 serves as the catalytic Charge relay system. N-linked (GlcNAc...) asparagine glycosylation occurs at asparagine 419. The Charge relay system role is filled by aspartate 465. The high affinity receptor-binding region which is also known as the TP508 peptide stretch occupies residues 554–576; that stretch reads AGYKPGEGKRGDACEGDSGGPFV. Serine 571 serves as the catalytic Charge relay system.

It belongs to the peptidase S1 family. As to quaternary structure, heterodimer (named alpha-thrombin) of a light and a heavy chain; disulfide-linked. Forms a heterodimer with SERPINA5. In plasma, interacts (via N-terminus) with alpha-1-microglobulin; this interaction does not prevent the activation of prothrombin to thrombin. Post-translationally, the gamma-carboxyglutamyl residues, which bind calcium ions, result from the carboxylation of glutamyl residues by a microsomal enzyme, the vitamin K-dependent carboxylase. The modified residues are necessary for the calcium-dependent interaction with a negatively charged phospholipid surface, which is essential for the conversion of prothrombin to thrombin. In the penultimate step of the coagulation cascade, prothrombin is converted to thrombin by the prothrombinase complex composed of factor Xa (F10), cofactor Va (F5), and phospholipids. This activation requires factor Xa-catalyzed sequential cleavage at 2 sites, Arg-317 and Arg-366, along 2 possible pathways. In the first pathway, the first cleavage occurs at Arg-317, leading to the formation of the inactive intermediate prethrombin-2. This pathway preferentially occurs on platelets and in the absence of cofactor Va. In the second pathway, the first cleavage occurs at Arg-366, which separates protease domain into 2 chains that remain connected through a disulfide bond and generates the active intermediate meizothrombin. The presence of cofactor Va directs activation along the meizothrombin pathway and greatly accelerates the rate of cleavage at Arg-366, but has a smaller effect on the cleavage of meizothrombin at Arg-317. Meizothrombin accumulates as an intermediate when prothrombinase is assembled on the membrane of red blood cells. As to expression, expressed by the liver and secreted in plasma.

It localises to the secreted. It is found in the extracellular space. The catalysed reaction is Selective cleavage of Arg-|-Gly bonds in fibrinogen to form fibrin and release fibrinopeptides A and B.. Its activity is regulated as follows. Activity is promoted in the presence of negatively charged surfaces, such as polyphosphate and dextran sulfate. Inhibited by SERPINA5. Its function is as follows. Thrombin, which cleaves bonds after Arg and Lys, converts fibrinogen to fibrin and activates factors V, VII, VIII, XIII, and, in complex with thrombomodulin, protein C. Functions in blood homeostasis, inflammation and wound healing. Activates coagulation factor XI (F11); activation is promoted by the contact with negatively charged surfaces. Triggers the production of pro-inflammatory cytokines, such as MCP-1/CCL2 and IL8/CXCL8, in endothelial cells. The protein is Prothrombin (F2) of Bos taurus (Bovine).